We begin with the raw amino-acid sequence, 286 residues long: Transmembrane protein 156 (286 aa).

At 1 to 4 (MTET) the chain is on the cytoplasmic side. The chain crosses the membrane as a helical span at residues 5 to 25 (AFLKLFVAIVITFILVLPEFF). Over 26-214 (KTPKERTLEL…KSVTCSMKIT (189 aa)) the chain is Extracellular. N-linked (GlcNAc...) asparagine glycans are attached at residues asparagine 45, asparagine 54, asparagine 76, and asparagine 142. A helical membrane pass occupies residues 215–235 (WYVLVLFVFMLGIIFIIYKIL). At 236–286 (EEHRRVWRRQSHNYKSSSVLFRGHDSGKLSTLNVRVIPGYPWTIWTRDFDE) the chain is on the cytoplasmic side.

It is found in the membrane. This chain is Transmembrane protein 156 (Tmem156), found in Rattus norvegicus (Rat).